We begin with the raw amino-acid sequence, 400 residues long: Nicotinate phosphoribosyltransferase (400 aa).

At His220 the chain carries Phosphohistidine; by autocatalysis.

It belongs to the NAPRTase family. Transiently phosphorylated on a His residue during the reaction cycle. Phosphorylation strongly increases the affinity for substrates and increases the rate of nicotinate D-ribonucleotide production. Dephosphorylation regenerates the low-affinity form of the enzyme, leading to product release.

The enzyme catalyses nicotinate + 5-phospho-alpha-D-ribose 1-diphosphate + ATP + H2O = nicotinate beta-D-ribonucleotide + ADP + phosphate + diphosphate. It functions in the pathway cofactor biosynthesis; NAD(+) biosynthesis; nicotinate D-ribonucleotide from nicotinate: step 1/1. Catalyzes the synthesis of beta-nicotinate D-ribonucleotide from nicotinate and 5-phospho-D-ribose 1-phosphate at the expense of ATP. This chain is Nicotinate phosphoribosyltransferase, found in Salmonella typhi.